Consider the following 136-residue polypeptide: Putative pre-16S rRNA nuclease (136 aa).

The protein belongs to the YqgF nuclease family.

It is found in the cytoplasm. Functionally, could be a nuclease involved in processing of the 5'-end of pre-16S rRNA. The chain is Putative pre-16S rRNA nuclease from Francisella philomiragia subsp. philomiragia (strain ATCC 25017 / CCUG 19701 / FSC 153 / O#319-036).